The primary structure comprises 419 residues: UDP-N-acetylglucosamine 1-carboxyvinyltransferase (419 aa).

22–23 (KN) serves as a coordination point for phosphoenolpyruvate. Arginine 93 is a UDP-N-acetyl-alpha-D-glucosamine binding site. The active-site Proton donor is the cysteine 117. Position 117 is a 2-(S-cysteinyl)pyruvic acid O-phosphothioketal (cysteine 117). 2 residues coordinate UDP-N-acetyl-alpha-D-glucosamine: aspartate 307 and isoleucine 329.

It belongs to the EPSP synthase family. MurA subfamily.

The protein localises to the cytoplasm. It catalyses the reaction phosphoenolpyruvate + UDP-N-acetyl-alpha-D-glucosamine = UDP-N-acetyl-3-O-(1-carboxyvinyl)-alpha-D-glucosamine + phosphate. It participates in cell wall biogenesis; peptidoglycan biosynthesis. In terms of biological role, cell wall formation. Adds enolpyruvyl to UDP-N-acetylglucosamine. This chain is UDP-N-acetylglucosamine 1-carboxyvinyltransferase, found in Shewanella woodyi (strain ATCC 51908 / MS32).